We begin with the raw amino-acid sequence, 383 residues long: Podocin (383 aa).

Over residues 1-41 (MERRARSSSRESRGRGGRTPHKENKRAKAERSGGGRGRQEA) the composition is skewed to basic and acidic residues. Residues 1-76 (MERRARSSSR…VDEVRGSGEE (76 aa)) are disordered. Over 1–102 (MERRARSSSR…TKSSGLGACE (102 aa)) the chain is Cytoplasmic. The S-palmitoyl cysteine moiety is linked to residue Cys101. An intramembrane segment occupies 103–123 (WLLVLISLLFIIMTFPFSIWF). Residues 124–383 (CVKVVQEYER…NPKKKDSPML (260 aa)) are Cytoplasmic-facing. N-linked (GlcNAc...) asparagine glycosylation is present at Gln287. The segment at 355–383 (NRTQGSLPFPSPSKPVEPLNPKKKDSPML) is disordered. A compositionally biased stretch (basic and acidic residues) spans 374 to 383 (NPKKKDSPML).

The protein belongs to the band 7/mec-2 family. As to quaternary structure, interacts with nephrin/NPHS1 and KIRREL1. Interacts directly with CD2AP. Interacts with DDN. Post-translationally, glycosylated. In terms of tissue distribution, almost exclusively expressed in the podocytes of fetal and mature kidney glomeruli.

It is found in the cell membrane. The protein resides in the endoplasmic reticulum. In terms of biological role, plays a role in the regulation of glomerular permeability, acting probably as a linker between the plasma membrane and the cytoskeleton. The sequence is that of Podocin (NPHS2) from Homo sapiens (Human).